The following is a 217-amino-acid chain: 3,4-dihydroxy-2-butanone 4-phosphate synthase (217 aa).

D-ribulose 5-phosphate contacts are provided by residues 37-38, Asp42, 150-154, and Glu174; these read RE and RRGHT. Glu38 contacts Mg(2+). Mg(2+) is bound at residue His153.

It belongs to the DHBP synthase family. Homodimer. Requires Mg(2+) as cofactor. The cofactor is Mn(2+).

The catalysed reaction is D-ribulose 5-phosphate = (2S)-2-hydroxy-3-oxobutyl phosphate + formate + H(+). It functions in the pathway cofactor biosynthesis; riboflavin biosynthesis; 2-hydroxy-3-oxobutyl phosphate from D-ribulose 5-phosphate: step 1/1. Catalyzes the conversion of D-ribulose 5-phosphate to formate and 3,4-dihydroxy-2-butanone 4-phosphate. The chain is 3,4-dihydroxy-2-butanone 4-phosphate synthase from Shewanella sp. (strain MR-4).